The chain runs to 126 residues: Aspartate 1-decarboxylase (126 aa).

Residue Ser-25 is the Schiff-base intermediate with substrate; via pyruvic acid of the active site. Residue Ser-25 is modified to Pyruvic acid (Ser). Thr-57 contacts substrate. Tyr-58 serves as the catalytic Proton donor. 73 to 75 contributes to the substrate binding site; that stretch reads GGA.

Belongs to the PanD family. As to quaternary structure, heterooctamer of four alpha and four beta subunits. Pyruvate serves as cofactor. Post-translationally, is synthesized initially as an inactive proenzyme, which is activated by self-cleavage at a specific serine bond to produce a beta-subunit with a hydroxyl group at its C-terminus and an alpha-subunit with a pyruvoyl group at its N-terminus.

It is found in the cytoplasm. It catalyses the reaction L-aspartate + H(+) = beta-alanine + CO2. It participates in cofactor biosynthesis; (R)-pantothenate biosynthesis; beta-alanine from L-aspartate: step 1/1. In terms of biological role, catalyzes the pyruvoyl-dependent decarboxylation of aspartate to produce beta-alanine. The sequence is that of Aspartate 1-decarboxylase from Xylella fastidiosa (strain M12).